A 214-amino-acid polypeptide reads, in one-letter code: GTP-binding nuclear protein GSP1 (214 aa).

The Small GTPase Ran-type domain maps to 4 to 172 (RELTYKICLI…LHLARIFTGR (169 aa)). 17 to 22 (GVGKTT) lines the GTP pocket. The interval 34–42 (KNYNATVGA) is switch-I. GTP contacts are provided by residues Gly-66, 121 to 124 (NKID), and 151 to 153 (SAK). Residues 66–82 (GQEKKAVLKDVYYIGAS) are switch-II.

It belongs to the small GTPase superfamily. Ran family. In terms of assembly, found in a nuclear export complex with RanGTP, exportin and pre-miRNA.

It localises to the nucleus. Functionally, GTP-binding protein involved in nucleocytoplasmic transport. Required for the import of protein into the nucleus and also for RNA export. The protein is GTP-binding nuclear protein GSP1 (GSP1) of Encephalitozoon cuniculi (strain GB-M1) (Microsporidian parasite).